Consider the following 338-residue polypeptide: Aspartate carbamoyltransferase catalytic subunit (338 aa).

Carbamoyl phosphate-binding residues include Arg-72 and Thr-73. Lys-100 provides a ligand contact to L-aspartate. Carbamoyl phosphate-binding residues include Arg-122, His-152, and Gln-155. L-aspartate-binding residues include Arg-186 and Arg-243. Gly-284 and Pro-285 together coordinate carbamoyl phosphate.

It belongs to the aspartate/ornithine carbamoyltransferase superfamily. ATCase family. In terms of assembly, heterododecamer (2C3:3R2) of six catalytic PyrB chains organized as two trimers (C3), and six regulatory PyrI chains organized as three dimers (R2).

The catalysed reaction is carbamoyl phosphate + L-aspartate = N-carbamoyl-L-aspartate + phosphate + H(+). It functions in the pathway pyrimidine metabolism; UMP biosynthesis via de novo pathway; (S)-dihydroorotate from bicarbonate: step 2/3. Its function is as follows. Catalyzes the condensation of carbamoyl phosphate and aspartate to form carbamoyl aspartate and inorganic phosphate, the committed step in the de novo pyrimidine nucleotide biosynthesis pathway. The protein is Aspartate carbamoyltransferase catalytic subunit of Acinetobacter baylyi (strain ATCC 33305 / BD413 / ADP1).